The chain runs to 304 residues: Recombination-associated protein RdgC (304 aa).

The protein belongs to the RdgC family.

Its subcellular location is the cytoplasm. It localises to the nucleoid. Its function is as follows. May be involved in recombination. This chain is Recombination-associated protein RdgC, found in Shewanella sp. (strain W3-18-1).